The chain runs to 396 residues: 1-deoxy-D-xylulose 5-phosphate reductoisomerase (396 aa).

NADPH contacts are provided by threonine 13, glycine 14, serine 15, isoleucine 16, and asparagine 127. Residue lysine 128 participates in 1-deoxy-D-xylulose 5-phosphate binding. Position 129 (glutamate 129) interacts with NADPH. Aspartate 153 contacts Mn(2+). 1-deoxy-D-xylulose 5-phosphate-binding residues include serine 154, glutamate 155, serine 184, and histidine 207. Glutamate 155 is a binding site for Mn(2+). Position 213 (glycine 213) interacts with NADPH. 1-deoxy-D-xylulose 5-phosphate contacts are provided by serine 220, asparagine 225, lysine 226, and glutamate 229. A Mn(2+)-binding site is contributed by glutamate 229.

The protein belongs to the DXR family. It depends on Mg(2+) as a cofactor. Requires Mn(2+) as cofactor.

The catalysed reaction is 2-C-methyl-D-erythritol 4-phosphate + NADP(+) = 1-deoxy-D-xylulose 5-phosphate + NADPH + H(+). Its pathway is isoprenoid biosynthesis; isopentenyl diphosphate biosynthesis via DXP pathway; isopentenyl diphosphate from 1-deoxy-D-xylulose 5-phosphate: step 1/6. Its function is as follows. Catalyzes the NADPH-dependent rearrangement and reduction of 1-deoxy-D-xylulose-5-phosphate (DXP) to 2-C-methyl-D-erythritol 4-phosphate (MEP). The sequence is that of 1-deoxy-D-xylulose 5-phosphate reductoisomerase from Stutzerimonas stutzeri (strain A1501) (Pseudomonas stutzeri).